A 279-amino-acid polypeptide reads, in one-letter code: Homeobox protein BarH-like 2 (279 aa).

2 disordered regions span residues 110 to 137 and 194 to 279; these read APGG…RRSR and KGGQ…PPLS. Residues 118–128 show a composition bias toward polar residues; the sequence is SSESETEQPTP. The homeobox DNA-binding region spans 133–192; the sequence is PRRSRTIFTELQLMGLEKKFQKQKYLSTPDRLDLAQSLGLTQLQVKTWYQNRRMKWKKMV. The span at 225–240 shows a compositional bias: polar residues; the sequence is NSQAQGQEQLEPSQGQ. Pro residues predominate over residues 261–279; sequence PPDPPQELPIPSSEPPPLS.

It belongs to the BAR homeobox family. In terms of tissue distribution, highly expressed in adult salivary gland and at much lower levels in mammary gland, kidney and placenta.

It localises to the nucleus. Its function is as follows. Transcription factor. Binds optimally to the DNA consensus sequence 5'-YYTAATGRTTTTY-3'. May control the expression of neural adhesion molecules such as L1 or Ng-CAM during embryonic development of both the central and peripherical nervous system. May be involved in controlling adhesive processes in keratinizing epithelia. The chain is Homeobox protein BarH-like 2 (BARX2) from Homo sapiens (Human).